A 384-amino-acid chain; its full sequence is MGIKKLTDLIEDNAPTSIKTNILKNYFGRIIAIDASTSLYQFLIAMNADVSSALTNQLGETTSHLQGMFYRTIKLISRGIKPIYVFDGSAPVLKSGELAKRQARRKEAKENLKEATEVGTNEEVQKFAKRVITVTRKQNEDCIKLLTLMGVPIVKAPCEAEAQCAEIVKKGKAWATGSEDMDSLTLGSTVLLRRLFFSEAKKMPILEFELQSVLEGLGLTQDEFIDLSILLGCDYCDSIKGIGPKRAIELIQKHKSLEEVIKHLDKSKYPLPEFFPYPEVRELFKNPNVIPADQLPPFQWKDPDVEGLNKFLVEEMGFSDVRVAQGIEKLKKFKNTSVQSRMDSFITVIKKPEDPNDKKKKVTKTPSKPSAKTSKKSSSTFKRK.

The interval 1 to 105 is N-domain; that stretch reads MGIKKLTDLI…GELAKRQARR (105 aa). Asp34 contributes to the Mg(2+) binding site. Residue Arg71 coordinates DNA. Mg(2+)-binding residues include Asp87, Glu159, Glu161, Asp180, and Asp182. The segment at 123-254 is I-domain; the sequence is EVQKFAKRVI…KRAIELIQKH (132 aa). Glu159 provides a ligand contact to DNA. Positions 232 and 234 each coordinate DNA. Position 234 (Asp234) interacts with Mg(2+). The interaction with PCNA stretch occupies residues 338 to 346; sequence VQSRMDSFI. A disordered region spans residues 349–384; sequence IKKPEDPNDKKKKVTKTPSKPSAKTSKKSSSTFKRK. Over residues 364–384 the composition is skewed to low complexity; that stretch reads KTPSKPSAKTSKKSSSTFKRK.

It belongs to the XPG/RAD2 endonuclease family. FEN1 subfamily. Interacts with PCNA. Three molecules of repg bind to one PCNA trimer with each molecule binding to one PCNA monomer. PCNA stimulates the nuclease activity without altering cleavage specificity. Requires Mg(2+) as cofactor. Post-translationally, phosphorylated. Phosphorylation upon DNA damage induces relocalization to the nuclear plasma.

Its subcellular location is the nucleus. It is found in the nucleolus. It localises to the nucleoplasm. The protein localises to the mitochondrion. Structure-specific nuclease with 5'-flap endonuclease and 5'-3' exonuclease activities involved in DNA replication and repair. During DNA replication, cleaves the 5'-overhanging flap structure that is generated by displacement synthesis when DNA polymerase encounters the 5'-end of a downstream Okazaki fragment. It enters the flap from the 5'-end and then tracks to cleave the flap base, leaving a nick for ligation. Also involved in the long patch base excision repair (LP-BER) pathway, by cleaving within the apurinic/apyrimidinic (AP) site-terminated flap. Acts as a genome stabilization factor that prevents flaps from equilibrating into structures that lead to duplications and deletions. Also possesses 5'-3' exonuclease activity on nicked or gapped double-stranded DNA, and exhibits RNase H activity. Also involved in replication and repair of rDNA and in repairing mitochondrial DNA. The sequence is that of Flap endonuclease 1 from Dictyostelium discoideum (Social amoeba).